The following is a 365-amino-acid chain: Probable G-protein coupled receptor 142 (365 aa).

Residues Met1–Cys66 lie on the Extracellular side of the membrane. The N-linked (GlcNAc...) asparagine glycan is linked to Asn44. The chain crosses the membrane as a helical span at residues Val67–Ala87. Residues Leu88 to Tyr102 lie on the Cytoplasmic side of the membrane. Residues Leu103 to Leu123 form a helical membrane-spanning segment. Topologically, residues Leu124–Thr140 are extracellular. A helical membrane pass occupies residues Ala141 to Val161. Residues Asp162–Ala185 are Cytoplasmic-facing. Residues Ile186–Val206 form a helical membrane-spanning segment. The Extracellular portion of the chain corresponds to Trp207–His224. A helical membrane pass occupies residues Cys225–Leu245. Over Arg246 to Ala264 the chain is Cytoplasmic. The helical transmembrane segment at Ile265–Leu285 threads the bilayer. Topologically, residues Tyr286–Asp304 are extracellular. Residues Ile305–Ser325 traverse the membrane as a helical segment. The Cytoplasmic segment spans residues Lys326–Leu365.

It belongs to the G-protein coupled receptor 1 family.

It is found in the cell membrane. In terms of biological role, orphan receptor. This Mus musculus (Mouse) protein is Probable G-protein coupled receptor 142 (Gpr142).